Consider the following 554-residue polypeptide: CTP synthase (554 aa).

The interval 1-270 (MTKFVFVTGG…DGLICDKLRL (270 aa)) is amidoligase domain. A CTP-binding site is contributed by Ser13. A UTP-binding site is contributed by Ser13. Residues 14-19 (SLGKGI) and Asp71 each bind ATP. 2 residues coordinate Mg(2+): Asp71 and Glu144. CTP is bound by residues 151–153 (DIE), 191–196 (KTKPTQ), and Lys227. UTP-binding positions include 191–196 (KTKPTQ) and Lys227. The 254-residue stretch at 295–548 (TVAMVGKYVD…IAAAKARHQA (254 aa)) folds into the Glutamine amidotransferase type-1 domain. Gly357 is a binding site for L-glutamine. Cys384 (nucleophile; for glutamine hydrolysis) is an active-site residue. L-glutamine is bound by residues 385 to 388 (LGMQ), Glu408, and Arg474. Active-site residues include His521 and Glu523.

The protein belongs to the CTP synthase family. As to quaternary structure, homotetramer.

The enzyme catalyses UTP + L-glutamine + ATP + H2O = CTP + L-glutamate + ADP + phosphate + 2 H(+). It carries out the reaction L-glutamine + H2O = L-glutamate + NH4(+). The catalysed reaction is UTP + NH4(+) + ATP = CTP + ADP + phosphate + 2 H(+). The protein operates within pyrimidine metabolism; CTP biosynthesis via de novo pathway; CTP from UDP: step 2/2. Its activity is regulated as follows. Allosterically activated by GTP, when glutamine is the substrate; GTP has no effect on the reaction when ammonia is the substrate. The allosteric effector GTP functions by stabilizing the protein conformation that binds the tetrahedral intermediate(s) formed during glutamine hydrolysis. Inhibited by the product CTP, via allosteric rather than competitive inhibition. Its function is as follows. Catalyzes the ATP-dependent amination of UTP to CTP with either L-glutamine or ammonia as the source of nitrogen. Regulates intracellular CTP levels through interactions with the four ribonucleotide triphosphates. The protein is CTP synthase of Verminephrobacter eiseniae (strain EF01-2).